We begin with the raw amino-acid sequence, 326 residues long: MCSTSVYDLEDIPLEDDDPNSIEFKILAFYARHHVFKSTPAVFSPKLSRTRSLSQKALGTWSTDSWTQISLPCRDSLSSEKHISLGKKKSSWRTLFRVTEKEEEPPSSPKEIHAQGPFPVERQGRNQHWSRSLSSVEQCLESEAVDSKVACIANRVAEIVYSWPPPDDSQSQGGGKFKESVPKILHFELQGPQLRPCDSKKDGEDQIINRIVELLKYSGDQLGREIKRDKALVSIFQEGLSYSVFRTITDLFLRDVDTRGESEIKAQGFKAALAIDAIAKLTAIDNHPMNRMLGFGTKYLREYFSPWVQQNGGWEKILGLSHEEVD.

S44 carries the phosphoserine modification. The interval T99–Q127 is disordered. The BH3 signature appears at I211 to E225. The BH2 signature appears at W307 to W314.

Belongs to the Bcl-2 family. In terms of processing, phosphorylated by MELK, leading to inhibit its pro-apoptotic function.

The protein resides in the cytoplasm. In terms of biological role, plays a role in apoptosis. The protein is Apoptosis facilitator Bcl-2-like protein 14 (Bcl2l14) of Rattus norvegicus (Rat).